The chain runs to 311 residues: Olfactory receptor 10G7 (311 aa).

Topologically, residues 1–23 are extracellular; it reads MSNATLLTAFILTGLPHAPGLDA. An N-linked (GlcNAc...) asparagine glycan is attached at asparagine 3. Residues 24–44 traverse the membrane as a helical segment; it reads PLFGIFLVVYVLTVLGNLLIL. At 45-52 the chain is on the cytoplasmic side; that stretch reads LVIRVDSH. A helical transmembrane segment spans residues 53–73; it reads LHTPMYYFLTNLSFIDMWFST. Residues 74-98 lie on the Extracellular side of the membrane; the sequence is VTVPKMLMTLVSPSGRTISFHSCVA. An intrachain disulfide couples cysteine 96 to cysteine 188. A helical transmembrane segment spans residues 99–119; it reads QLYFFHFLGSTECFLYTVMSY. Over 120–138 the chain is Cytoplasmic; sequence DRYLAISYPLRYTNMMTGR. Residues 139-159 traverse the membrane as a helical segment; that stretch reads SCALLATGTWLSGSLHSAVQT. Topologically, residues 160–196 are extracellular; it reads ILTFHLPYCGPNQIQHYFCDAPPILKLACADTSANEM. A helical transmembrane segment spans residues 197–216; that stretch reads VIFVNIGLVASGCFVLIVLS. The Cytoplasmic segment spans residues 217-236; that stretch reads YVSIVCSILRIRTSEGRHRA. The helical transmembrane segment at 237–257 threads the bilayer; the sequence is FQTCASHCIVVLCFFGPGLFI. Over 258–268 the chain is Extracellular; sequence YLRPGSRDALH. The helical transmembrane segment at 269 to 289 threads the bilayer; the sequence is GVVAVFYTTLTPLFNPVVYTL. The Cytoplasmic segment spans residues 290 to 311; it reads RNKEVKKALLKLKNGSVFAQGE.

It belongs to the G-protein coupled receptor 1 family.

It is found in the cell membrane. Functionally, odorant receptor. The chain is Olfactory receptor 10G7 (OR10G7) from Homo sapiens (Human).